We begin with the raw amino-acid sequence, 388 residues long: L-lactate dehydrogenase (388 aa).

One can recognise an FMN hydroxy acid dehydrogenase domain in the interval 1–380 (MIISAASDYR…SADALSRVTR (380 aa)). Tyr24 is a binding site for substrate. FMN is bound by residues Ser106 and Gln127. Position 129 (Tyr129) interacts with substrate. Thr155 provides a ligand contact to FMN. Arg164 is a binding site for substrate. Lys251 is an FMN binding site. Residue His275 is the Proton acceptor of the active site. Arg278 contacts substrate. 306–330 (DSGIRSGLDVVRMLALGADAVLLGR) contacts FMN.

It belongs to the FMN-dependent alpha-hydroxy acid dehydrogenase family. FMN serves as cofactor.

It is found in the cell inner membrane. It carries out the reaction (S)-lactate + A = pyruvate + AH2. Catalyzes the conversion of L-lactate to pyruvate. Is coupled to the respiratory chain. This chain is L-lactate dehydrogenase, found in Xanthomonas euvesicatoria pv. vesicatoria (strain 85-10) (Xanthomonas campestris pv. vesicatoria).